A 532-amino-acid polypeptide reads, in one-letter code: Probable cytochrome c oxidase subunit 1 (532 aa).

A run of 8 helical transmembrane segments spans residues 33–53 (IMYIIFAIFAGIVGGLFSLLF), 74–94 (VLITAHAVIMVFFMIMPALFG), 95–115 (GFGNYFVPLLIGAPDMAFPRL), 118–138 (ISFWLLVPAFILLMGSAFVDG), 163–183 (MAIFSLHLTGLSSILGSINLI), 200–220 (PLFVWSILVTAFLIILAMPVL), 252–272 (LFWFFGHPEVYIVILPGFGIV), and 284–304 (IFGYQGMVGAMVIIGFVGFIV). H79 contributes to the Fe(II)-heme a binding site. Cu cation-binding residues include H258 and Y262. H307 and H308 together coordinate Cu cation. Helical transmembrane passes span 318 to 338 (ALIYFTAGTMIIAIPTGIKIF) and 355 to 375 (MLFSIGFIILFTIGGVTGIIL). H393 lines the heme a3 pocket. 3 helical membrane-spanning segments follow: residues 394 to 414 (FHYTMSLGALFTAFAGFYYWF), 431 to 451 (FWITFVGVNLTFFPQHFLGLA), and 473 to 493 (IGAGISMAAALYFVFIVFYTL). H395 contacts Fe(II)-heme a.

The protein belongs to the heme-copper respiratory oxidase family.

It localises to the cell membrane. It catalyses the reaction 4 Fe(II)-[cytochrome c] + O2 + 8 H(+)(in) = 4 Fe(III)-[cytochrome c] + 2 H2O + 4 H(+)(out). The protein operates within energy metabolism; oxidative phosphorylation. Functionally, cytochrome c oxidase is the component of the respiratory chain that catalyzes the reduction of oxygen to water. Subunits 1-3 form the functional core of the enzyme complex. CO I is the catalytic subunit of the enzyme. Electrons originating in cytochrome c are transferred via the copper A center of subunit 2 and heme A of subunit 1 to the bimetallic center formed by heme A3 and copper B. This Rickettsia bellii (strain RML369-C) protein is Probable cytochrome c oxidase subunit 1 (ctaD).